The following is a 216-amino-acid chain: uncharacterized protein (216 aa).

A helical membrane pass occupies residues 5–22 (LGLVFGSVILIYLISLFL).

It localises to the membrane. This is an uncharacterized protein from Aquifex aeolicus (strain VF5).